Consider the following 156-residue polypeptide: Small ribosomal subunit protein uS7 (156 aa).

The protein belongs to the universal ribosomal protein uS7 family. In terms of assembly, part of the 30S ribosomal subunit. Contacts proteins S9 and S11.

One of the primary rRNA binding proteins, it binds directly to 16S rRNA where it nucleates assembly of the head domain of the 30S subunit. Is located at the subunit interface close to the decoding center, probably blocks exit of the E-site tRNA. This chain is Small ribosomal subunit protein uS7, found in Shewanella piezotolerans (strain WP3 / JCM 13877).